We begin with the raw amino-acid sequence, 234 residues long: Orotidine 5'-phosphate decarboxylase (234 aa).

Residues aspartate 10, lysine 32, 59–68, threonine 119, arginine 180, glutamine 189, glycine 209, and arginine 210 contribute to the substrate site; that span reads DLKFHDIPNT. Residue lysine 61 is the Proton donor of the active site.

Belongs to the OMP decarboxylase family. Type 1 subfamily. As to quaternary structure, homodimer.

The catalysed reaction is orotidine 5'-phosphate + H(+) = UMP + CO2. It functions in the pathway pyrimidine metabolism; UMP biosynthesis via de novo pathway; UMP from orotate: step 2/2. Its function is as follows. Catalyzes the decarboxylation of orotidine 5'-monophosphate (OMP) to uridine 5'-monophosphate (UMP). The chain is Orotidine 5'-phosphate decarboxylase from Mannheimia succiniciproducens (strain KCTC 0769BP / MBEL55E).